A 122-amino-acid polypeptide reads, in one-letter code: Holo-[acyl-carrier-protein] synthase (122 aa).

Residues D8 and E57 each coordinate Mg(2+).

Belongs to the P-Pant transferase superfamily. AcpS family. Mg(2+) serves as cofactor.

It is found in the cytoplasm. The enzyme catalyses apo-[ACP] + CoA = holo-[ACP] + adenosine 3',5'-bisphosphate + H(+). Its function is as follows. Transfers the 4'-phosphopantetheine moiety from coenzyme A to a Ser of acyl-carrier-protein. The sequence is that of Holo-[acyl-carrier-protein] synthase from Exiguobacterium sp. (strain ATCC BAA-1283 / AT1b).